We begin with the raw amino-acid sequence, 543 residues long: Zinc finger protein 280B (543 aa).

M1 carries the N-acetylmethionine modification. The span at 1-10 (MEQSCEEEKE) shows a compositional bias: acidic residues. A disordered region spans residues 1 to 23 (MEQSCEEEKEPEPQKNIQETKQV). Residues S68 and S70 each carry the phosphoserine modification. Residues 105–138 (SQLESRSTDSPIIIEPLSKPDYRNSSPQVVPNNS) are disordered. Over residues 128-138 (NSSPQVVPNNS) the composition is skewed to low complexity. Glycyl lysine isopeptide (Lys-Gly) (interchain with G-Cter in SUMO2) cross-links involve residues K173, K247, and K261. C2H2-type zinc fingers lie at residues 343 to 366 (TTCQHCHRQFPTPFQLQCHIENVH), 373 to 396 (TVCKICELSFETDQVLLQHMKDHH), 432 to 454 (LLCPFCLKIFKTATPYMCHYRGH), and 460 to 483 (HQCSKCRLQFLTFKEKMEHKTQCH). Residues 518–543 (ASITVSTSDSEPSLPRSKSKISKKSH) are disordered. Residues 534–543 (SKSKISKKSH) show a composition bias toward basic residues.

The protein localises to the nucleus. May function as a transcription factor. This Homo sapiens (Human) protein is Zinc finger protein 280B (ZNF280B).